A 444-amino-acid polypeptide reads, in one-letter code: Gamma-glutamyl phosphate reductase (444 aa).

Belongs to the gamma-glutamyl phosphate reductase family.

The protein localises to the cytoplasm. The enzyme catalyses L-glutamate 5-semialdehyde + phosphate + NADP(+) = L-glutamyl 5-phosphate + NADPH + H(+). It functions in the pathway amino-acid biosynthesis; L-proline biosynthesis; L-glutamate 5-semialdehyde from L-glutamate: step 2/2. Functionally, catalyzes the NADPH-dependent reduction of L-glutamate 5-phosphate into L-glutamate 5-semialdehyde and phosphate. The product spontaneously undergoes cyclization to form 1-pyrroline-5-carboxylate. This chain is Gamma-glutamyl phosphate reductase, found in Albidiferax ferrireducens (strain ATCC BAA-621 / DSM 15236 / T118) (Rhodoferax ferrireducens).